A 95-amino-acid chain; its full sequence is Protein TRACHEARY ELEMENT DIFFERENTIATION-RELATED 6 (95 aa).

The Extracellular segment spans residues 1-3; sequence MAT. Residues 4-24 traverse the membrane as a helical segment; that stretch reads IFIVFVSFGCVFVLGIAAFVL. The Cytoplasmic segment spans residues 25 to 95; it reads CCLIKKWKCS…KLGTASTSKA (71 aa).

As to quaternary structure, interacts with the secondary cell wall (SCW)-related cellulose synthase complex. In terms of tissue distribution, accumulates in cells differentiating into tracheary element (TE) which undergo secondary cell wall (SCW) formation.

The protein localises to the cell membrane. It is found in the secreted. The protein resides in the cell wall. Its function is as follows. Involved in the secondary cell wall (SCW) formation of vessel elements (e.g. protoxylem and metaxylem), thus promoting tracheary element (TE) differentiation. The chain is Protein TRACHEARY ELEMENT DIFFERENTIATION-RELATED 6 from Zinnia elegans (Garden zinnia).